Consider the following 321-residue polypeptide: Lipoyl synthase (321 aa).

The [4Fe-4S] cluster site is built by Cys-68, Cys-73, Cys-79, Cys-94, Cys-98, Cys-101, and Ser-308. Residues 80 to 297 (FNHGTATFMI…KVIAEDLGFS (218 aa)) form the Radical SAM core domain.

It belongs to the radical SAM superfamily. Lipoyl synthase family. Requires [4Fe-4S] cluster as cofactor.

It localises to the cytoplasm. The enzyme catalyses [[Fe-S] cluster scaffold protein carrying a second [4Fe-4S](2+) cluster] + N(6)-octanoyl-L-lysyl-[protein] + 2 oxidized [2Fe-2S]-[ferredoxin] + 2 S-adenosyl-L-methionine + 4 H(+) = [[Fe-S] cluster scaffold protein] + N(6)-[(R)-dihydrolipoyl]-L-lysyl-[protein] + 4 Fe(3+) + 2 hydrogen sulfide + 2 5'-deoxyadenosine + 2 L-methionine + 2 reduced [2Fe-2S]-[ferredoxin]. Its pathway is protein modification; protein lipoylation via endogenous pathway; protein N(6)-(lipoyl)lysine from octanoyl-[acyl-carrier-protein]: step 2/2. Its function is as follows. Catalyzes the radical-mediated insertion of two sulfur atoms into the C-6 and C-8 positions of the octanoyl moiety bound to the lipoyl domains of lipoate-dependent enzymes, thereby converting the octanoylated domains into lipoylated derivatives. In Shewanella amazonensis (strain ATCC BAA-1098 / SB2B), this protein is Lipoyl synthase.